The chain runs to 559 residues: MYLNITGMTCDSCATHVKDALEKVPGVLSALVSYPKGSAQLATDPGTSPEALTAAVAGLGYKATPADAPSTSARGRLLGKALGWLGGGDKAGGDGDGLHVAVIGSGAAMAAALKAVEQGANVTLIERGTIGGTCVNVGCVPSKIMIRAAHIAHLRRESPFDGGIAATVPAIDRSKLLAQQQARVDELRHAKYEGILDDNPAITVLHGEARFKDDQSLAVRLNDGGERVVAFDRCLVATGASPAVPPIPGLKESPYWTSTEALVSDTIPERLAVIGSSVVALELAQAFARLGSKVTILARSTLFFREDPAIGEAVTAAFRAEGIKVLEYTQASQVAHVDGEFVLTTGYGEIRADQLLVATGRAPNTRSLALEAAGVAANAQGAIVIDKGMRTSTPHIYAAGDCTDQPQFVYVAAAAGTRAAINMTGGDAALDLTAMPAVVFTDPQVATVGYSEAEAHHDGIETDSRTLTLDNVPRALANFDTRGFIKLVIEEGSGRLIGVQAVAPEAGELIQTAVLAIRNRMTVQELADQLFPYLTMVEGLKLAAQTFSKDVKQLSCCAG.

The HMA domain occupies 1-64 (MYLNITGMTC…AVAGLGYKAT (64 aa)). C10 and C13 together coordinate a metal cation. Positions 108, 128, and 133 each coordinate FAD. C134 and C139 are joined by a disulfide. Residues K143, A209, D401, and V409 each coordinate FAD. The Hg(2+) site is built by C556 and C557.

It belongs to the class-I pyridine nucleotide-disulfide oxidoreductase family. Homodimer. Requires FAD as cofactor.

The enzyme catalyses Hg + NADP(+) + H(+) = Hg(2+) + NADPH. Its function is as follows. Resistance to Hg(2+) in bacteria appears to be governed by a specialized system which includes mercuric reductase. MerA protein is responsible for volatilizing mercury as Hg(0). The protein is Mercuric reductase (merA) of Alcaligenes sp.